A 312-amino-acid polypeptide reads, in one-letter code: Putative S-adenosyl-L-methionine-dependent methyltransferase Mkms_0097 (312 aa).

S-adenosyl-L-methionine-binding positions include aspartate 134 and 163–164 (DL).

It belongs to the UPF0677 family.

In terms of biological role, exhibits S-adenosyl-L-methionine-dependent methyltransferase activity. This chain is Putative S-adenosyl-L-methionine-dependent methyltransferase Mkms_0097, found in Mycobacterium sp. (strain KMS).